The primary structure comprises 420 residues: Multiple sugar-binding protein (420 aa).

Positions 1-22 (MKWYKKIGLLGIVGLTSVLLAA) are cleaved as a signal peptide. Cysteine 23 carries the N-palmitoyl cysteine lipid modification. Residue cysteine 23 is the site of S-diacylglycerol cysteine attachment.

Belongs to the bacterial solute-binding protein 1 family.

The protein resides in the cell membrane. In terms of biological role, involved in a binding protein-dependent transport system responsible for the uptake of melibiose, raffinose and isomaltotriose. The sequence is that of Multiple sugar-binding protein from Streptococcus mutans serotype c (strain ATCC 700610 / UA159).